We begin with the raw amino-acid sequence, 139 residues long: Protein cornichon homolog 4 (139 aa).

3 helical membrane passes run 5–25 (VFLF…YFII), 57–77 (IVTV…NLPV), and 118–138 (LGFY…ALIN).

Belongs to the cornichon family. Interacts with Sec23/24 complex components SEC24B and SEC24D. Interacts with CCR5. Interacts with ADRB2 in the early secretory pathway.

It is found in the membrane. It localises to the endoplasmic reticulum. The protein localises to the endoplasmic reticulum-Golgi intermediate compartment. Functionally, involved in G protein-coupled receptors (GPCRs) trafficking from the endoplasmic reticulum to the cell surface; it promotes the exit of GPCRs from the early secretory pathway, likely through interaction with the COPII machinery. This Mus musculus (Mouse) protein is Protein cornichon homolog 4 (Cnih4).